The primary structure comprises 35 residues: Z-limacoditoxin(1)-Dv1 (35 aa).

A signal peptide spans 1-22; it reads MKKTFLPIFLVILLASYALANP. Q23 is subject to Pyrrolidone carboxylic acid. P32 is modified (proline amide).

The protein belongs to the limacoditoxin-1 (ACP-like) family. Expressed by the venom secretory cell of the spine. The spine is a cuticular structure containing a single large nucleated venom-secreting cell at its base. It is an independent unit capable of producing, storing and injecting venom. On the back of D.vulnerans caterpillars, spines are grouped together by 50 to 100 to form scoli, of which there are eight in D.vulnerans.

It localises to the secreted. Its function is as follows. Potently activates insect G protein-coupled receptor. It activates the ACP receptor (ACPR) from the mosquito A.aegypti (EC(50)=0.55 nM) with a potency comparable to that of the endogenous ligand. Has no activity on receptors of the closely related neuropeptides adipokinetic hormone and corazonin. In vivo, does not reveal any observable effects when injected into crickets (A.domesticus). Does not induce increase in intracellular calcium in mouse DRG neurons, suggesting that it does not induce pain. This Doratifera vulnerans (Mottled cup moth) protein is Z-limacoditoxin(1)-Dv1.